We begin with the raw amino-acid sequence, 469 residues long: Probable glucuronoxylan glucuronosyltransferase F8H (469 aa).

Over 1–36 (MSLDIKKPNITKTKKKKTGFVVKMQLNNNRGGNKRN) the chain is Cytoplasmic. A helical; Signal-anchor for type II membrane protein transmembrane segment spans residues 37–57 (IFIFFFFRNYYTWILWFCLSL). The Lumenal portion of the chain corresponds to 58–469 (YFFTSYFSVE…RVLSQREVDM (412 aa)). 4 N-linked (GlcNAc...) asparagine glycosylation sites follow: N171, N203, N301, and N411.

Belongs to the glycosyltransferase 47 family. Expressed in xylem cells in stems and in roots.

The protein resides in the golgi apparatus membrane. Functionally, involved in the synthesis of the hemicellulose glucuronoxylan, a major component of secondary cell walls. Probably involved in the synthesis of the glycosyl sequence at the glucuronoxylan reducing end. The protein is Probable glucuronoxylan glucuronosyltransferase F8H (F8H) of Arabidopsis thaliana (Mouse-ear cress).